The chain runs to 336 residues: Peroxidase 72 (336 aa).

An N-terminal signal peptide occupies residues 1–23 (MAKSLNILIAALSLIAFSPFCLC). 4 cysteine pairs are disulfide-bonded: Cys-42–Cys-122, Cys-75–Cys-80, Cys-128–Cys-329, and Cys-207–Cys-239. The active-site Proton acceptor is His-73. The Ca(2+) site is built by Asp-74, Val-77, Gly-79, Asp-81, and Ser-83. Residue Pro-170 participates in substrate binding. Residue Asn-173 is glycosylated (N-linked (GlcNAc...) asparagine). His-200 provides a ligand contact to heme b. A Ca(2+)-binding site is contributed by Thr-201. A glycan (N-linked (GlcNAc...) asparagine) is linked at Asn-216. Residues Asp-252, Thr-255, and Asp-260 each coordinate Ca(2+).

Belongs to the peroxidase family. Classical plant (class III) peroxidase subfamily. Heme b is required as a cofactor. Requires Ca(2+) as cofactor. As to expression, slightly expressed in roots.

Its subcellular location is the secreted. It carries out the reaction 2 a phenolic donor + H2O2 = 2 a phenolic radical donor + 2 H2O. Its function is as follows. Removal of H(2)O(2), oxidation of toxic reductants, biosynthesis and degradation of lignin, suberization, auxin catabolism, response to environmental stresses such as wounding, pathogen attack and oxidative stress. These functions might be dependent on each isozyme/isoform in each plant tissue. The polypeptide is Peroxidase 72 (PER72) (Arabidopsis thaliana (Mouse-ear cress)).